A 350-amino-acid chain; its full sequence is 2-oxoglutarate-dependent ethylene/succinate-forming enzyme (350 aa).

Residues 166–286 (GWHHMRVLRF…RFACAYFHEP (121 aa)) enclose the Fe2OG dioxygenase domain. The Fe cation site is built by H189 and H268.

Belongs to the iron/ascorbate-dependent oxidoreductase family. Monomer. Fe(2+) is required as a cofactor.

The enzyme catalyses 2-oxoglutarate + O2 + 2 H(+) = ethene + 3 CO2 + H2O. The catalysed reaction is L-arginine + 2-oxoglutarate + O2 = guanidine + L-glutamate 5-semialdehyde + succinate + CO2. It functions in the pathway alkene biosynthesis; ethylene biosynthesis via 2-oxoglutarate. Activated by catalase. Inhibited by chelating reagents such as EDTA and Tiron (4,5-dihydroxy-1,3-benzene disulphonic acid), and by DTNB (5,5'-dithio-bis-2-nitrobenzoate) and hydrogen peroxide. Its function is as follows. Simultaneously catalyzes two reactions, namely formation of ethylene and of succinate from 2-oxoglutarate, with a molar ratio of 2:1. This Pseudomonas savastanoi pv. phaseolicola (Pseudomonas syringae pv. phaseolicola) protein is 2-oxoglutarate-dependent ethylene/succinate-forming enzyme (efe).